A 422-amino-acid chain; its full sequence is Mitogen-activated protein kinase spm1 (422 aa).

Residues 21–314 (FKVVKELGQG…VDDALEHPYL (294 aa)) enclose the Protein kinase domain. ATP-binding positions include 27-35 (LGQGAYGIV) and K52. D149 serves as the catalytic Proton acceptor. T186 carries the phosphothreonine modification. Positions 186 to 188 (TEY) match the TXY motif. Y188 carries the post-translational modification Phosphotyrosine. A disordered region spans residues 359–422 (RRRSHPTNPT…DHKSDDNRHN (64 aa)). Polar residues predominate over residues 364-379 (PTNPTVNIPQPAQTVP). Residues 380 to 397 (SNDNGSFNVSSSSSSQTS) show a composition bias toward low complexity. Residues 411–422 (AIDHKSDDNRHN) show a composition bias toward basic and acidic residues.

The protein belongs to the protein kinase superfamily. CMGC Ser/Thr protein kinase family. MAP kinase subfamily. Mg(2+) serves as cofactor. In terms of processing, dually phosphorylated on Thr-186 and Tyr-188, which activates the enzyme.

It catalyses the reaction L-seryl-[protein] + ATP = O-phospho-L-seryl-[protein] + ADP + H(+). The enzyme catalyses L-threonyl-[protein] + ATP = O-phospho-L-threonyl-[protein] + ADP + H(+). Its activity is regulated as follows. Activated by tyrosine and threonine phosphorylation by skh1/pek1. Its function is as follows. Regulates cell integrity and functions coordinately with the protein kinase C pathway (pck1 and pck2). Involved the regulation of wall architecture, cell shape, cytokinesis in exponential and stationary phase, and metabolism of ions. This chain is Mitogen-activated protein kinase spm1 (spm1), found in Schizosaccharomyces pombe (strain 972 / ATCC 24843) (Fission yeast).